The chain runs to 273 residues: Probable membrane transporter protein YunE (273 aa).

A run of 8 helical transmembrane segments spans residues 3 to 23 (FVIL…IGLG), 50 to 70 (AIGT…LAYI), 81 to 101 (LIFF…SKLF), 105 to 125 (SFSV…MLKA), 157 to 177 (VGIA…IGGG), 185 to 205 (MLLF…IIFL), 222 to 242 (WLYA…GAAI), and 251 to 271 (IVMI…YEGI).

This sequence belongs to the 4-toluene sulfonate uptake permease (TSUP) (TC 2.A.102) family.

Its subcellular location is the cell membrane. This is Probable membrane transporter protein YunE (yunE) from Bacillus subtilis (strain 168).